The sequence spans 483 residues: Glutamate--tRNA ligase (483 aa).

The short motif at 11–21 (PSPTGHLHIGN) is the 'HIGH' region element. 4 residues coordinate Zn(2+): C108, C110, C135, and H137. The 'KMSKS' region motif lies at 252–256 (KLSKR). An ATP-binding site is contributed by K255.

Belongs to the class-I aminoacyl-tRNA synthetase family. Glutamate--tRNA ligase type 1 subfamily. In terms of assembly, monomer. Zn(2+) serves as cofactor.

It is found in the cytoplasm. The enzyme catalyses tRNA(Glu) + L-glutamate + ATP = L-glutamyl-tRNA(Glu) + AMP + diphosphate. Catalyzes the attachment of glutamate to tRNA(Glu) in a two-step reaction: glutamate is first activated by ATP to form Glu-AMP and then transferred to the acceptor end of tRNA(Glu). This Bacillus pumilus (strain SAFR-032) protein is Glutamate--tRNA ligase.